A 185-amino-acid chain; its full sequence is Fimbrial subunit type 1 (185 aa).

The N-terminal stretch at M1–A22 is a signal peptide. The cysteines at positions 46 and 86 are disulfide-linked.

The protein belongs to the fimbrial protein family.

The protein localises to the fimbrium. The protein is Fimbrial subunit type 1 of Salmonella typhimurium.